The following is a 545-amino-acid chain: Acetyltransferase BOT5 (545 aa).

The N-terminal stretch at methionine 1–alanine 19 is a signal peptide. 2 N-linked (GlcNAc...) asparagine glycosylation sites follow: asparagine 70 and asparagine 198. The active-site Proton acceptor is histidine 208. Residues asparagine 346 and asparagine 445 are each glycosylated (N-linked (GlcNAc...) asparagine). The interval glycine 466–arginine 493 is disordered.

Belongs to the plant acyltransferase family.

The protein operates within secondary metabolite biosynthesis. In terms of biological role, acetyltransferase; part of the gene cluster that mediates the biosynthesis of botrydial. Botrydial is necessary for colonization of plant tissue by the T4 strain. It is a strain-dependent virulence factor since highly aggressive strains like SAS56 or B05 still retain substantial virulence when botrydial synthesis is impaired, since they produce also botcinic acid. The first step of botrydial biosynthesis is performed by the sesquiterpene synthase BOT2 which catalyzes the cyclization of farnesyl diphosphate (FPP) to presilphiperfolan-8-beta-ol (PSP). The cytochrome P450 monooxygenase BOT4 then catalyzes the hydroxylation at C-4 to give a probotryane intermediate. Acetylation of the hydroxyl at C-4 is carried out by the acetyltransferase BOT5, followed by the combined action of the P450 monooxygenases BOT3 and BOT1, to yield finally the glycol, via the regio- and stereospecific hydroxylations at C-10 and C-15 of the probotryane intermediates, respectively. The cleavage of the C10-C15 bond of probotryane skeleton is an intriguing and chemically important reaction, which could be mediated by some of the monooxygenases or by a combination of them. It is possible that either BOT3 or BOT1 would oxidize either the 10- or the 15-hydroxy group to the hydroperoxide derivative, which would then undergo heterolytic fragmentation to give the dialdehyde botrydial. Finally, the dehydrogenase BOT7 might be involved in the conversion of botrydial to dihydrobotrydial. This chain is Acetyltransferase BOT5, found in Botryotinia fuckeliana (Noble rot fungus).